A 429-amino-acid polypeptide reads, in one-letter code: Serine--tRNA ligase (429 aa).

229–231 (TAE) serves as a coordination point for L-serine. Position 260 to 262 (260 to 262 (RSE)) interacts with ATP. An L-serine-binding site is contributed by Glu283. An ATP-binding site is contributed by 347 to 350 (EISS). Ser383 contributes to the L-serine binding site.

The protein belongs to the class-II aminoacyl-tRNA synthetase family. Type-1 seryl-tRNA synthetase subfamily. In terms of assembly, homodimer. The tRNA molecule binds across the dimer.

It is found in the cytoplasm. The catalysed reaction is tRNA(Ser) + L-serine + ATP = L-seryl-tRNA(Ser) + AMP + diphosphate + H(+). It carries out the reaction tRNA(Sec) + L-serine + ATP = L-seryl-tRNA(Sec) + AMP + diphosphate + H(+). Its pathway is aminoacyl-tRNA biosynthesis; selenocysteinyl-tRNA(Sec) biosynthesis; L-seryl-tRNA(Sec) from L-serine and tRNA(Sec): step 1/1. Functionally, catalyzes the attachment of serine to tRNA(Ser). Is also able to aminoacylate tRNA(Sec) with serine, to form the misacylated tRNA L-seryl-tRNA(Sec), which will be further converted into selenocysteinyl-tRNA(Sec). The sequence is that of Serine--tRNA ligase from Orientia tsutsugamushi (strain Ikeda) (Rickettsia tsutsugamushi).